Consider the following 406-residue polypeptide: Eukaryotic initiation factor 4A-I (406 aa).

The disordered stretch occupies residues 1-21 (MSASQDSRSRDNGPDGMEPEG). Ser2 carries the N-acetylserine modification. Phosphoserine is present on Ser4. The short motif at 32–60 (DSFDDMNLSESLLRGIYAYGFEKPSAIQQ) is the Q motif element. Residues 63–234 (ILPCIKGYDV…KKFMRDPIRI (172 aa)) enclose the Helicase ATP-binding domain. 76 to 83 (AQSGTGKT) is an ATP binding site. The residue at position 118 (Lys118) is an N6-acetyllysine. Residue Lys146 forms a Glycyl lysine isopeptide (Lys-Gly) (interchain with G-Cter in SUMO2) linkage. Residue Thr158 is modified to Phosphothreonine. An N6-acetyllysine modification is found at Lys174. The DEAD box motif lies at 182–185 (DEAD). At Lys193 the chain carries N6-acetyllysine. Lys225 is covalently cross-linked (Glycyl lysine isopeptide (Lys-Gly) (interchain with G-Cter in SUMO2)). The residue at position 238 (Lys238) is an N6-acetyllysine; alternate. Lys238 participates in a covalent cross-link: Glycyl lysine isopeptide (Lys-Gly) (interchain with G-Cter in SUMO2); alternate. The 162-residue stretch at 245–406 (GIRQFYINVE…EMPLNVADLI (162 aa)) folds into the Helicase C-terminal domain. Glycyl lysine isopeptide (Lys-Gly) (interchain with G-Cter in SUMO2) cross-links involve residues Lys309, Lys369, and Lys381.

It belongs to the DEAD box helicase family. eIF4A subfamily. In terms of assembly, eIF4F is a multi-subunit complex, the composition of which varies with external and internal environmental conditions. It is composed of at least EIF4A, EIF4E and EIF4G1/EIF4G3. Interacts with PAIP1, EIF4E and UPF2. Found in a complex with XPO7, EIF4A1, ARHGAP1, VPS26A, VPS29, VPS35 and SFN. May interact with NOM1. Interacts with PDCD4; this interferes with the interaction between EIF4A and EIF4G. Interacts with RBM4. Interacts with DDX3X in an RNA-independent manner. Interacts with PKP1 (via N-terminus); the interaction promotes EIF4A1 recruitment to the cap-dependent translation complex and EIF4A1 ATPase activity.

It is found in the cytoplasm. Its subcellular location is the perinuclear region. It localises to the cell membrane. The protein localises to the stress granule. It carries out the reaction ATP + H2O = ADP + phosphate + H(+). Its function is as follows. ATP-dependent RNA helicase which is a subunit of the eIF4F complex involved in cap recognition and is required for mRNA binding to ribosome. In the current model of translation initiation, eIF4A unwinds RNA secondary structures in the 5'-UTR of mRNAs which is necessary to allow efficient binding of the small ribosomal subunit, and subsequent scanning for the initiator codon. As a result, promotes cell proliferation and growth. In Macaca fascicularis (Crab-eating macaque), this protein is Eukaryotic initiation factor 4A-I (EIF4A1).